Reading from the N-terminus, the 540-residue chain is Transcription initiation factor IIF subunit alpha (540 aa).

The span at 1–26 shows a compositional bias: basic and acidic residues; that stretch reads MDSQETKVFENVKQENPDEKKPKVEE. Disordered regions lie at residues 1-39 and 70-106; these read MDSQETKVFENVKQENPDEKKPKVEEPDSQNNASTQSQQ and IDPSKSFVPPIKMQRRDPNAPSSSNGEQNAEQGSSSN. Composition is skewed to polar residues over residues 29–39 and 89–106; these read SQNNASTQSQQ and APSSSNGEQNAEQGSSSN. Residues Ser259 and Ser261 each carry the phosphoserine modification. Positions 280 to 382 form a coiled coil; the sequence is MEGNEEDNKK…REEKLKSRFS (103 aa). A disordered region spans residues 341–416; the sequence is YESDEEDEDP…SSQLQSPNTS (76 aa). Residues 359-369 are compositionally biased toward acidic residues; that stretch reads SEEEVLQEEEE. The segment covering 381–416 has biased composition (polar residues); it reads FSANASKTNTPRPLERTPSSVSPVKASSQLQSPNTS. Residue Ser399 is modified to Phosphoserine.

Belongs to the TFIIF alpha subunit family. In terms of assembly, component of the fcp1/TFIIF/polII complex via interaction of tfg3 with both tfg1/TFIIF-alpha and tfg2/TFIIF-beta subunits.

Its subcellular location is the nucleus. In terms of biological role, TFIIF is a general transcription initiation factor that binds to RNA polymerase II and helps to recruit it to the initiation complex in collaboration with TFIIB. It promotes transcription elongation. This Schizosaccharomyces pombe (strain 972 / ATCC 24843) (Fission yeast) protein is Transcription initiation factor IIF subunit alpha (tfg1).